Reading from the N-terminus, the 394-residue chain is Phosphoglycerate kinase (394 aa).

Residues 21–23, R37, 60–63, R119, and R152 each bind substrate; these read DFN and HLGR. Residues K202, G293, E324, and 350–353 each bind ATP; that span reads GGDS.

Belongs to the phosphoglycerate kinase family. Monomer.

It is found in the cytoplasm. The catalysed reaction is (2R)-3-phosphoglycerate + ATP = (2R)-3-phospho-glyceroyl phosphate + ADP. Its pathway is carbohydrate degradation; glycolysis; pyruvate from D-glyceraldehyde 3-phosphate: step 2/5. This is Phosphoglycerate kinase from Caldanaerobacter subterraneus subsp. tengcongensis (strain DSM 15242 / JCM 11007 / NBRC 100824 / MB4) (Thermoanaerobacter tengcongensis).